Consider the following 119-residue polypeptide: Evasin P983 (119 aa).

An N-terminal signal peptide occupies residues 1 to 21; the sequence is MKASFCVIASCLVVFALKGTA. 4 disulfides stabilise this stretch: cysteine 37–cysteine 59, cysteine 55–cysteine 97, cysteine 72–cysteine 102, and cysteine 92–cysteine 111. N-linked (GlcNAc...) asparagine glycans are attached at residues asparagine 48 and asparagine 67.

The protein resides in the secreted. Salivary chemokine-binding protein which binds to host chemokines CCL2, CCL3 and CCL8. In Amblyomma cajennense (Cayenne tick), this protein is Evasin P983.